The following is a 130-amino-acid chain: uncharacterized protein (130 aa).

The signal sequence occupies residues 1–26 (MKFIYKLLFILSIVLFLFNNIITING). Asparagine 88 is a glycosylation site (N-linked (GlcNAc...) asparagine).

Its subcellular location is the secreted. This is an uncharacterized protein from Dictyostelium discoideum (Social amoeba).